Consider the following 127-residue polypeptide: Holo-[acyl-carrier-protein] synthase (127 aa).

Mg(2+) is bound by residues Asp-9 and Glu-58.

The protein belongs to the P-Pant transferase superfamily. AcpS family. It depends on Mg(2+) as a cofactor.

It localises to the cytoplasm. The catalysed reaction is apo-[ACP] + CoA = holo-[ACP] + adenosine 3',5'-bisphosphate + H(+). Functionally, transfers the 4'-phosphopantetheine moiety from coenzyme A to a Ser of acyl-carrier-protein. This is Holo-[acyl-carrier-protein] synthase from Shewanella baltica (strain OS223).